We begin with the raw amino-acid sequence, 175 residues long: Alpha-crystallin B chain (175 aa).

M1 carries the post-translational modification N-acetylmethionine. 3 positions are modified to phosphoserine: S19, S45, and S59. In terms of domain architecture, sHSP spans 56–164 (RAPSWIDTGL…PERTIPITRE (109 aa)). Residue H83 coordinates Zn(2+). K92 bears the N6-acetyllysine mark. Zn(2+)-binding residues include H104, E106, H111, and H119. The interval 145-175 (VNGPRKQASGPERTIPITREEKPAVTAAPKK) is disordered. K166 carries the N6-acetyllysine modification. The O-linked (GlcNAc) threonine glycan is linked to T170.

This sequence belongs to the small heat shock protein (HSP20) family. Heteromer composed of three CRYAA and one CRYAB subunits. Aggregates with homologous proteins, including the small heat shock protein HSPB1, to form large heteromeric complexes. Inter-subunit bridging via zinc ions enhances stability, which is crucial as there is no protein turn over in the lens. Interacts with HSPBAP1 and TTN/titin. Interacts with TMEM109; in the cellular response to DNA damage. Interacts with DES; binds rapidly during early stages of DES filament assembly and a reduced binding seen in the later stages. Interacts with TMED10; the interaction mediates the translocation from the cytoplasm into the ERGIC (endoplasmic reticulum-Golgi intermediate compartment) and thereby secretion. Interacts with ATP6V1A and with MTOR, forming a ternary complex. As to expression, lens as well as other tissues.

It is found in the cytoplasm. Its subcellular location is the nucleus. The protein localises to the secreted. The protein resides in the lysosome. Functionally, may contribute to the transparency and refractive index of the lens. Has chaperone-like activity, preventing aggregation of various proteins under a wide range of stress conditions. In lens epithelial cells, stabilizes the ATP6V1A protein, preventing its degradation by the proteasome. The sequence is that of Alpha-crystallin B chain (CRYAB) from Mesocricetus auratus (Golden hamster).